The sequence spans 540 residues: Putative actin-fragmin kinase DDB_G0287957 (540 aa).

Residues lysine 27–asparagine 68 adopt a coiled-coil conformation. Disordered stretches follow at residues isoleucine 37 to asparagine 70 and asparagine 317 to cysteine 341.

The protein belongs to the protein kinase superfamily. AFK Ser/Thr protein kinase family.

This Dictyostelium discoideum (Social amoeba) protein is Putative actin-fragmin kinase DDB_G0287957.